A 248-amino-acid chain; its full sequence is tRNA (guanine-N(7)-)-methyltransferase (248 aa).

Glu80, Glu105, Asp132, and Asp155 together coordinate S-adenosyl-L-methionine. Residue Asp155 is part of the active site. Substrate contacts are provided by residues Lys159, Asp191, and 223-226 (TKFE).

Belongs to the class I-like SAM-binding methyltransferase superfamily. TrmB family.

It catalyses the reaction guanosine(46) in tRNA + S-adenosyl-L-methionine = N(7)-methylguanosine(46) in tRNA + S-adenosyl-L-homocysteine. It functions in the pathway tRNA modification; N(7)-methylguanine-tRNA biosynthesis. Its function is as follows. Catalyzes the formation of N(7)-methylguanine at position 46 (m7G46) in tRNA. The sequence is that of tRNA (guanine-N(7)-)-methyltransferase from Nocardioides sp. (strain ATCC BAA-499 / JS614).